We begin with the raw amino-acid sequence, 154 residues long: Myoglobin (154 aa).

In terms of domain architecture, Globin spans 2–148 (VLSEGEWQLV…FRKDIAAKYK (147 aa)). Phosphoserine is present on Ser4. His65 lines the nitrite pocket. Residue His65 participates in O2 binding. A Phosphothreonine modification is found at Thr68. His94 contacts heme b.

Belongs to the globin family. Monomeric.

The protein localises to the cytoplasm. The protein resides in the sarcoplasm. The catalysed reaction is Fe(III)-heme b-[protein] + nitric oxide + H2O = Fe(II)-heme b-[protein] + nitrite + 2 H(+). It catalyses the reaction H2O2 + AH2 = A + 2 H2O. In terms of biological role, monomeric heme protein which primary function is to store oxygen and facilitate its diffusion within muscle tissues. Reversibly binds oxygen through a pentacoordinated heme iron and enables its timely and efficient release as needed during periods of heightened demand. Depending on the oxidative conditions of tissues and cells, and in addition to its ability to bind oxygen, it also has a nitrite reductase activity whereby it regulates the production of bioactive nitric oxide. Under stress conditions, like hypoxia and anoxia, it also protects cells against reactive oxygen species thanks to its pseudoperoxidase activity. This is Myoglobin (MB) from Physeter macrocephalus (Sperm whale).